A 381-amino-acid chain; its full sequence is EPS I polysaccharide export outer membrane protein EpsA (381 aa).

The signal sequence occupies residues 1 to 23 (MFVSIPNIRKAVVSLSVVPLLAA). A lipid anchor (N-palmitoyl cysteine) is attached at C24. A lipid anchor (S-diacylglycerol cysteine) is attached at C24.

It belongs to the BexD/CtrA/VexA family.

Its subcellular location is the cell outer membrane. Functionally, probably involved in polymerization and/or export of exopolysaccharide EPS I which functions as a virulence factor. The chain is EPS I polysaccharide export outer membrane protein EpsA (epsA) from Ralstonia nicotianae (strain ATCC BAA-1114 / GMI1000) (Ralstonia solanacearum).